Here is a 394-residue protein sequence, read N- to C-terminus: Elongation factor Tu (394 aa).

The tr-type G domain occupies 10 to 204; that stretch reads KPHVNVGTIG…AVDEWIPTPT (195 aa). The segment at 19-26 is G1; sequence GHIDHGKT. Residue 19–26 coordinates GTP; that stretch reads GHIDHGKT. Thr-26 contributes to the Mg(2+) binding site. A G2 region spans residues 60–64; the sequence is GITIN. The G3 stretch occupies residues 81–84; it reads DCPG. GTP contacts are provided by residues 81-85 and 136-139; these read DCPGH and NKCD. The interval 136–139 is G4; sequence NKCD. The interval 174–176 is G5; it reads SAL.

This sequence belongs to the TRAFAC class translation factor GTPase superfamily. Classic translation factor GTPase family. EF-Tu/EF-1A subfamily. In terms of assembly, monomer.

It is found in the cytoplasm. It catalyses the reaction GTP + H2O = GDP + phosphate + H(+). Functionally, GTP hydrolase that promotes the GTP-dependent binding of aminoacyl-tRNA to the A-site of ribosomes during protein biosynthesis. This Mycoplasma genitalium (strain ATCC 33530 / DSM 19775 / NCTC 10195 / G37) (Mycoplasmoides genitalium) protein is Elongation factor Tu.